The chain runs to 1225 residues: DNA-directed RNA polymerase subunit beta' (1225 aa).

Cys-60, Cys-62, Cys-75, and Cys-78 together coordinate Zn(2+). The Mg(2+) site is built by Asp-450, Asp-452, and Asp-454. Residues Cys-818, Cys-892, Cys-899, and Cys-902 each coordinate Zn(2+).

The protein belongs to the RNA polymerase beta' chain family. The RNAP catalytic core consists of 2 alpha, 1 beta, 1 beta' and 1 omega subunit. When a sigma factor is associated with the core the holoenzyme is formed, which can initiate transcription. It depends on Mg(2+) as a cofactor. Zn(2+) serves as cofactor.

The enzyme catalyses RNA(n) + a ribonucleoside 5'-triphosphate = RNA(n+1) + diphosphate. DNA-dependent RNA polymerase catalyzes the transcription of DNA into RNA using the four ribonucleoside triphosphates as substrates. This chain is DNA-directed RNA polymerase subunit beta', found in Streptococcus pneumoniae serotype 19F (strain G54).